The chain runs to 138 residues: Large ribosomal subunit protein eL14B (138 aa).

S2 bears the N-acetylserine mark.

The protein belongs to the eukaryotic ribosomal protein eL14 family. In terms of assembly, component of the large ribosomal subunit (LSU). Mature yeast ribosomes consist of a small (40S) and a large (60S) subunit. The 40S small subunit contains 1 molecule of ribosomal RNA (18S rRNA) and 33 different proteins (encoded by 57 genes). The large 60S subunit contains 3 rRNA molecules (25S, 5.8S and 5S rRNA) and 46 different proteins (encoded by 81 genes). N-terminally acetylated by acetyltransferase NatA.

It is found in the cytoplasm. Component of the ribosome, a large ribonucleoprotein complex responsible for the synthesis of proteins in the cell. The small ribosomal subunit (SSU) binds messenger RNAs (mRNAs) and translates the encoded message by selecting cognate aminoacyl-transfer RNA (tRNA) molecules. The large subunit (LSU) contains the ribosomal catalytic site termed the peptidyl transferase center (PTC), which catalyzes the formation of peptide bonds, thereby polymerizing the amino acids delivered by tRNAs into a polypeptide chain. The nascent polypeptides leave the ribosome through a tunnel in the LSU and interact with protein factors that function in enzymatic processing, targeting, and the membrane insertion of nascent chains at the exit of the ribosomal tunnel. The protein is Large ribosomal subunit protein eL14B of Saccharomyces cerevisiae (strain ATCC 204508 / S288c) (Baker's yeast).